The chain runs to 219 residues: Mucosal pentraxin (219 aa).

The signal sequence occupies residues 1–19 (MEKLIVGTLLLTVLSGGIS). Residues 24–219 (DGKAFIFPQE…YVVTKPKLWT (196 aa)) form the Pentraxin (PTX) domain. Cys-55 and Cys-114 form a disulfide bridge. Ca(2+)-binding residues include Asp-77, Asn-78, Glu-155, Gln-156, Asp-157, and Gln-167.

The protein belongs to the pentraxin family. Homopentamer. Pentraxin (or pentaxin) have a discoid arrangement of 5 non-covalently bound subunits. Ca(2+) serves as cofactor. As to expression, expression is restricted to small intestine, stomach and colon. Within colon, expressed in epithelial cells located within the lower to mid region of transverse and distal crypts, but not in proximal colon.

It is found in the secreted. The polypeptide is Mucosal pentraxin (Mptx1) (Rattus norvegicus (Rat)).